We begin with the raw amino-acid sequence, 299 residues long: Lymphocyte antigen 6 complex locus protein G6f (299 aa).

The N-terminal stretch at 1 to 19 (MAVLFLLLLFLCGLPQAET) is a signal peptide. One can recognise an Ig-like V-type domain in the interval 20–124 (DSIQAIYVVL…YRYQNWRVYD (105 aa)). Residues 20–237 (DSIQAIYVVL…APSADWDVAW (218 aa)) lie on the Extracellular side of the membrane. C37 and C108 form a disulfide bridge. An N-linked (GlcNAc...) asparagine glycan is attached at N90. A helical membrane pass occupies residues 238–258 (ILTLLLTVGQGFTIVVLGVML). Topologically, residues 259 to 299 (WRQRAQGAQHRNASFPQFKPEIQVYENIHLAHLSPPAPKTR) are cytoplasmic. Y283 carries the post-translational modification Phosphotyrosine.

In terms of assembly, homodimer; disulfide-linked. Interacts with GRB2 and GRB7 in a phosphorylation-dependent manner. In terms of processing, N-glycosylated.

The protein localises to the cell membrane. May play a role in the downstream signal transduction pathways involving GRB2 and GRB7. This chain is Lymphocyte antigen 6 complex locus protein G6f (LY6G6F), found in Bos taurus (Bovine).